A 123-amino-acid polypeptide reads, in one-letter code: uncharacterized protein (123 aa).

This is an uncharacterized protein from Shigella boydii serotype 4 (strain Sb227).